The primary structure comprises 289 residues: Acetyl-coenzyme A carboxylase carboxyl transferase subunit beta (289 aa).

One can recognise a CoA carboxyltransferase N-terminal domain in the interval 28–289 (VMTKCPKCKK…QGGGMAVWQS (262 aa)). Residues C32, C35, C51, and C54 each coordinate Zn(2+). The C4-type zinc finger occupies 32-54 (CPKCKKIMYTKELLKNLKVCVNC).

The protein belongs to the AccD/PCCB family. Acetyl-CoA carboxylase is a heterohexamer composed of biotin carboxyl carrier protein (AccB), biotin carboxylase (AccC) and two subunits each of ACCase subunit alpha (AccA) and ACCase subunit beta (AccD). Zn(2+) serves as cofactor.

The protein resides in the cytoplasm. The catalysed reaction is N(6)-carboxybiotinyl-L-lysyl-[protein] + acetyl-CoA = N(6)-biotinyl-L-lysyl-[protein] + malonyl-CoA. The protein operates within lipid metabolism; malonyl-CoA biosynthesis; malonyl-CoA from acetyl-CoA: step 1/1. In terms of biological role, component of the acetyl coenzyme A carboxylase (ACC) complex. Biotin carboxylase (BC) catalyzes the carboxylation of biotin on its carrier protein (BCCP) and then the CO(2) group is transferred by the transcarboxylase to acetyl-CoA to form malonyl-CoA. This is Acetyl-coenzyme A carboxylase carboxyl transferase subunit beta from Bacillus mycoides (strain KBAB4) (Bacillus weihenstephanensis).